Reading from the N-terminus, the 1393-residue chain is MFGENSRDIGVLSKEGLFDKLEIGIASDITIRDKWSCGEIKKPETINYRTFKPEKGGLFCEKIFGPTKDWECCCGKYKKIKHKGIVCDRCGVEVTLSKVRRERMAHIELAVPIVHIWFFKTTPSRIGNVLGMTASDLERVIYYEEYVVIDPGKTDLTKKQLLNDAQYREVVEKWGKDAFVAKMGGEAIYDLLKSEDLQSLLKDLKERLRKTKSQQARMKLAKRLKIIEGFVSSSNHPEWMVLKNIPVVPPDLRPLVPLDGGRFATSDLNDLYRRVINRNNRLKAILRLKTPEVIVRNEKRMLQEAVDALFDNGRHGHPVMGAGNRPLKSLSEMLKGKNGRFRQNLLGKRVDYSGRSVIIVGPELKFNQCGLPKEMALELFEPFIIKRLKDQGSVYTIRSAKKMIQRGAPEVWDVLEEIIKGHPVLLNRAPTLHRLGIQAFEPVLIEGKAIRIHPLVCAAFNADFDGDQMAVHVPLSVEAQLEAKVLMMAPDNIFLPSSGKPVAIPSKDMTLGLYYLMADPTYFPEEHGGKTKIFKDEIEVLRALNNGGFIDDVFGDRRDETGRGIHIHEKIKVRIDGQIIETTPGRVLFNRIVPKELGFQNYSMPSKRISELILQCYKKVGLEATVRFLDDLKDLGFIQATKAAISMGLKDVRIPDIKSHILKDAYDKVAIVKKQYDDGIITEGERHSKTISIWTEVSEQLSDALYVEISKQTRSKHNPLFLMIDSGARGNKSQLKQLGALRGLMAKPNGAIIESPITSNFREGLTVLEYSISSHGARKGLADTALKTADSGYLTRRLVDVAQDVIITEKDCGTLNHIEISAIGQGSEELLPLKDRIYGRTVAEDVYQPGDKSRLLAQSGDVLNSVQAEAIDDAGIETIKIRSTLTCESPRGVCAKCYGLNLANGRLIGMGEAVGIIAAQSIGEPGTQLTMRTFHLGGIAATSSTPEIITNSDGILVYMDLRVVLGQEGHNLVLNKKGALHVVGDEGRTLNEYKKLLSTKSIESLEVFPVELGVKILVADGTPVSQGQRIAEVELHNIPIICDKPGFIKYEDLVEGISTEKVVNKNTGLVELIVKQHRGELHPQIAIYDDADLSELVGTYAIPSGAIISVEEGQRVDPGMLLARLPRGAIKTKDITGGLPRVAELVEARKPEDAADIAKIDGVVDFKGIQKNKRILVVCDEMTGMEEEHLIPLTKHLIVQRGDSVIKGQQLTDGLVVPHEILEICGVRELQKYLVNEVQEVYRLQGVDINDKHIEIIVRQMLQKVRITDPGDTTLLFGEDVNKKEFYEENRRTEEDGGKPAQAVPVLLGITKASLGTESFISAASFQDTTRVLTDAACCSKTDYLLGFKENVIMGHMIPGGTGFETHKRIKQYLEKEQEDLVFDFVSETECVC.

Zn(2+) is bound by residues cysteine 72, cysteine 74, cysteine 87, and cysteine 90. Mg(2+)-binding residues include aspartate 463, aspartate 465, and aspartate 467. Zn(2+)-binding residues include cysteine 812, cysteine 887, cysteine 894, and cysteine 897.

Belongs to the RNA polymerase beta' chain family. The RNAP catalytic core consists of 2 alpha, 1 beta, 1 beta' and 1 omega subunit. When a sigma factor is associated with the core the holoenzyme is formed, which can initiate transcription. Mg(2+) serves as cofactor. It depends on Zn(2+) as a cofactor.

The catalysed reaction is RNA(n) + a ribonucleoside 5'-triphosphate = RNA(n+1) + diphosphate. In terms of biological role, DNA-dependent RNA polymerase catalyzes the transcription of DNA into RNA using the four ribonucleoside triphosphates as substrates. This chain is DNA-directed RNA polymerase subunit beta', found in Chlamydia pneumoniae (Chlamydophila pneumoniae).